The primary structure comprises 357 residues: Endo-1,4-beta-xylanase Xyn11B (357 aa).

An N-terminal signal peptide occupies residues 1–27 (MKIFQNTKNVIVSIAWAAALCTSAVSA). The GH11 domain occupies 29–226 (TLTSNSTGTN…SRGSSDITVS (198 aa)). The Nucleophile role is filled by Glu116. The active-site Proton donor is the Glu213. The tract at residues 220 to 245 (SSDITVSQGGSSGGGNSSSSSSASGG) is disordered.

It belongs to the glycosyl hydrolase 11 (cellulase G) family.

It localises to the secreted. It catalyses the reaction Endohydrolysis of (1-&gt;4)-beta-D-xylosidic linkages in xylans.. The protein operates within glycan degradation; xylan degradation. Endo-acting xylanase which specifically cleaves internal linkages on the xylan backbone, releasing xylooligosaccharides. Is able to hydrolyze glucuronoxylan and the arabinoxylan from wheat. In Cellvibrio japonicus (Pseudomonas fluorescens subsp. cellulosa), this protein is Endo-1,4-beta-xylanase Xyn11B (xyn11B).